Reading from the N-terminus, the 152-residue chain is Superoxide dismutase [Cu-Zn] 2 (152 aa).

Positions 45, 47, and 62 each coordinate Cu cation. The segment at 53 to 81 (TNGSMSTGPHFNPDGKQHGAPEDANRHAG) is disordered. H62, H70, H79, and D82 together coordinate Zn(2+). Basic and acidic residues predominate over residues 65–81 (PDGKQHGAPEDANRHAG). H119 lines the Cu cation pocket.

Belongs to the Cu-Zn superoxide dismutase family. As to quaternary structure, homodimer. Requires Cu cation as cofactor. The cofactor is Zn(2+).

It localises to the cytoplasm. It carries out the reaction 2 superoxide + 2 H(+) = H2O2 + O2. In terms of biological role, destroys radicals which are normally produced within the cells and which are toxic to biological systems. This is Superoxide dismutase [Cu-Zn] 2 (SODCC2) from Brassica juncea (Indian mustard).